Here is a 123-residue protein sequence, read N- to C-terminus: Small ribosomal subunit protein uS12 (123 aa).

3-methylthioaspartic acid is present on aspartate 89.

The protein belongs to the universal ribosomal protein uS12 family. Part of the 30S ribosomal subunit. Contacts proteins S8 and S17. May interact with IF1 in the 30S initiation complex.

Functionally, with S4 and S5 plays an important role in translational accuracy. In terms of biological role, interacts with and stabilizes bases of the 16S rRNA that are involved in tRNA selection in the A site and with the mRNA backbone. Located at the interface of the 30S and 50S subunits, it traverses the body of the 30S subunit contacting proteins on the other side and probably holding the rRNA structure together. The combined cluster of proteins S8, S12 and S17 appears to hold together the shoulder and platform of the 30S subunit. The protein is Small ribosomal subunit protein uS12 of Gluconacetobacter diazotrophicus (strain ATCC 49037 / DSM 5601 / CCUG 37298 / CIP 103539 / LMG 7603 / PAl5).